We begin with the raw amino-acid sequence, 160 residues long: Nucleotide-binding protein BAV0791 (160 aa).

Belongs to the YajQ family.

Its function is as follows. Nucleotide-binding protein. This chain is Nucleotide-binding protein BAV0791, found in Bordetella avium (strain 197N).